A 282-amino-acid polypeptide reads, in one-letter code: Pyridoxal 5'-phosphate synthase subunit PdxS (282 aa).

A D-ribose 5-phosphate-binding site is contributed by D14. K71 functions as the Schiff-base intermediate with D-ribose 5-phosphate in the catalytic mechanism. G143 is a D-ribose 5-phosphate binding site. D-glyceraldehyde 3-phosphate is bound at residue R155. D-ribose 5-phosphate-binding positions include G204 and G225 to S226.

Belongs to the PdxS/SNZ family. In terms of assembly, in the presence of PdxT, forms a dodecamer of heterodimers.

The enzyme catalyses aldehydo-D-ribose 5-phosphate + D-glyceraldehyde 3-phosphate + L-glutamine = pyridoxal 5'-phosphate + L-glutamate + phosphate + 3 H2O + H(+). Its pathway is cofactor biosynthesis; pyridoxal 5'-phosphate biosynthesis. Functionally, catalyzes the formation of pyridoxal 5'-phosphate from ribose 5-phosphate (RBP), glyceraldehyde 3-phosphate (G3P) and ammonia. The ammonia is provided by the PdxT subunit. Can also use ribulose 5-phosphate and dihydroxyacetone phosphate as substrates, resulting from enzyme-catalyzed isomerization of RBP and G3P, respectively. This is Pyridoxal 5'-phosphate synthase subunit PdxS from Treponema denticola (strain ATCC 35405 / DSM 14222 / CIP 103919 / JCM 8153 / KCTC 15104).